Consider the following 206-residue polypeptide: Elongation factor Ts (206 aa).

The segment at 81 to 84 (TDFV) is involved in Mg(2+) ion dislocation from EF-Tu.

The protein belongs to the EF-Ts family.

It localises to the cytoplasm. Associates with the EF-Tu.GDP complex and induces the exchange of GDP to GTP. It remains bound to the aminoacyl-tRNA.EF-Tu.GTP complex up to the GTP hydrolysis stage on the ribosome. The sequence is that of Elongation factor Ts from Maridesulfovibrio salexigens (strain ATCC 14822 / DSM 2638 / NCIMB 8403 / VKM B-1763) (Desulfovibrio salexigens).